A 235-amino-acid polypeptide reads, in one-letter code: tRNA (guanine-N(1)-)-methyltransferase (235 aa).

S-adenosyl-L-methionine-binding positions include Gly114 and 134–139 (VGDYIL).

Belongs to the RNA methyltransferase TrmD family. In terms of assembly, homodimer.

It localises to the cytoplasm. The catalysed reaction is guanosine(37) in tRNA + S-adenosyl-L-methionine = N(1)-methylguanosine(37) in tRNA + S-adenosyl-L-homocysteine + H(+). Its function is as follows. Specifically methylates guanosine-37 in various tRNAs. This is tRNA (guanine-N(1)-)-methyltransferase from Chelativorans sp. (strain BNC1).